The chain runs to 366 residues: Phospho-N-acetylmuramoyl-pentapeptide-transferase (366 aa).

The next 10 membrane-spanning stretches (helical) occupy residues 27 to 47 (AALF…INSL), 71 to 91 (TPTM…LLWA), 93 to 113 (LSNV…AIGF), 138 to 158 (FVIA…SGIA), 174 to 194 (FMIN…VGAG), 205 to 225 (GLAI…AYLA), 245 to 265 (LAVV…FNAP), 268 to 288 (AIFM…TVAV), 294 to 314 (IVMA…IIQV), and 343 to 363 (QVVI…LSTL).

This sequence belongs to the glycosyltransferase 4 family. MraY subfamily. Mg(2+) is required as a cofactor.

The protein localises to the cell inner membrane. It catalyses the reaction UDP-N-acetyl-alpha-D-muramoyl-L-alanyl-gamma-D-glutamyl-meso-2,6-diaminopimeloyl-D-alanyl-D-alanine + di-trans,octa-cis-undecaprenyl phosphate = di-trans,octa-cis-undecaprenyl diphospho-N-acetyl-alpha-D-muramoyl-L-alanyl-D-glutamyl-meso-2,6-diaminopimeloyl-D-alanyl-D-alanine + UMP. It functions in the pathway cell wall biogenesis; peptidoglycan biosynthesis. Its function is as follows. Catalyzes the initial step of the lipid cycle reactions in the biosynthesis of the cell wall peptidoglycan: transfers peptidoglycan precursor phospho-MurNAc-pentapeptide from UDP-MurNAc-pentapeptide onto the lipid carrier undecaprenyl phosphate, yielding undecaprenyl-pyrophosphoryl-MurNAc-pentapeptide, known as lipid I. The polypeptide is Phospho-N-acetylmuramoyl-pentapeptide-transferase (Rhizobium johnstonii (strain DSM 114642 / LMG 32736 / 3841) (Rhizobium leguminosarum bv. viciae)).